Consider the following 453-residue polypeptide: MKEKQFWNRILEFAQERLTRSMYDFYAIQAELIKVEENVATIFLPRSEMEMVWEKQLKDIIVVAGFEIYDAEITPHYIFTKPQDTTSSQVEEATNLTLYDYSPKLVSIPYSDTGLKEKYTFDNFIQGDGNVWAVSAALAVSEDLALTYNPLFIYGGPGLGKTHLLNAIGNEILKNIPNARVKYIPAESFINDFLDHLRLGEMEKFKKTYRSLDLLLIDDIQSLSGKKVATQEEFFNTFNALHDKQKQIVLTSDRSPKHLEGLEERLVTRFSWGLTQTITPPDFETRIAILQSKTEHLGYNFQSDTLEYLAGQFDSNVRDLEGAINDITLIARVKKIKDITIDIAAEAIRARKQDVSQMLVIPIDKIQTEVGNFYGVSIKEMKGSRRLQNIVLARQVAMYLSRELTDNSLPKIGKEFGGKDHTTVIHAHAKIKSLIDQDDNLRLEIESIKKKIK.

The interval 1-74 is domain I, interacts with DnaA modulators; the sequence is MKEKQFWNRI…GFEIYDAEIT (74 aa). The interval 74 to 113 is domain II; that stretch reads TPHYIFTKPQDTTSSQVEEATNLTLYDYSPKLVSIPYSDT. The segment at 114 to 331 is domain III, AAA+ region; it reads GLKEKYTFDN…GAINDITLIA (218 aa). 4 residues coordinate ATP: glycine 158, glycine 160, lysine 161, and threonine 162. The domain IV, binds dsDNA stretch occupies residues 332–453; sequence RVKKIKDITI…EIESIKKKIK (122 aa).

The protein belongs to the DnaA family. In terms of assembly, oligomerizes as a right-handed, spiral filament on DNA at oriC. Interacts (via domains I and III) with CcrZ.

It is found in the cytoplasm. CcrZ stimulates DnaA, possibly by phosphorylation of an intermediate molecule, to initiate DNA replication. Plays an essential role in the initiation and regulation of chromosomal replication. ATP-DnaA binds to the origin of replication (oriC) to initiate formation of the DNA replication initiation complex once per cell cycle. Binds the DnaA box (a 9 base pair repeat at the origin) and separates the double-stranded (ds)DNA. Forms a right-handed helical filament on oriC DNA; dsDNA binds to the exterior of the filament while single-stranded (ss)DNA is stabiized in the filament's interior. The ATP-DnaA-oriC complex binds and stabilizes one strand of the AT-rich DNA unwinding element (DUE), permitting loading of DNA polymerase. After initiation quickly degrades to an ADP-DnaA complex that is not apt for DNA replication. Binds acidic phospholipids. Its function is as follows. Mutations in this gene suppress a deletion of cell cycle regulator ccrZ. This Streptococcus pneumoniae serotype 2 (strain D39 / NCTC 7466) protein is Chromosomal replication initiator protein DnaA.